A 159-amino-acid polypeptide reads, in one-letter code: NAD(P)H-quinone oxidoreductase subunit J, chloroplastic (159 aa).

Belongs to the complex I 30 kDa subunit family. In terms of assembly, NDH is composed of at least 16 different subunits, 5 of which are encoded in the nucleus.

It is found in the plastid. It localises to the chloroplast thylakoid membrane. The catalysed reaction is a plastoquinone + NADH + (n+1) H(+)(in) = a plastoquinol + NAD(+) + n H(+)(out). The enzyme catalyses a plastoquinone + NADPH + (n+1) H(+)(in) = a plastoquinol + NADP(+) + n H(+)(out). Its function is as follows. NDH shuttles electrons from NAD(P)H:plastoquinone, via FMN and iron-sulfur (Fe-S) centers, to quinones in the photosynthetic chain and possibly in a chloroplast respiratory chain. The immediate electron acceptor for the enzyme in this species is believed to be plastoquinone. Couples the redox reaction to proton translocation, and thus conserves the redox energy in a proton gradient. The protein is NAD(P)H-quinone oxidoreductase subunit J, chloroplastic of Agrostis stolonifera (Creeping bentgrass).